A 158-amino-acid chain; its full sequence is MAKKISDPNYKVIAENRRARFDYAIESDLECGIMLEGSEVKALRGGGSNIADSYAAVENGELWLVNAYIPPYEQAKMFKHEERRRRKLLVSRKELANLWNATQRKGMTLVPLVLYFNHKGIAKMKLGIAKGKKIHDKRETEAKRDWNRQKQRLLKDNA.

Positions 133-158 are disordered; sequence KIHDKRETEAKRDWNRQKQRLLKDNA. Over residues 136 to 158 the composition is skewed to basic and acidic residues; it reads DKRETEAKRDWNRQKQRLLKDNA.

This sequence belongs to the SmpB family.

The protein localises to the cytoplasm. Its function is as follows. Required for rescue of stalled ribosomes mediated by trans-translation. Binds to transfer-messenger RNA (tmRNA), required for stable association of tmRNA with ribosomes. tmRNA and SmpB together mimic tRNA shape, replacing the anticodon stem-loop with SmpB. tmRNA is encoded by the ssrA gene; the 2 termini fold to resemble tRNA(Ala) and it encodes a 'tag peptide', a short internal open reading frame. During trans-translation Ala-aminoacylated tmRNA acts like a tRNA, entering the A-site of stalled ribosomes, displacing the stalled mRNA. The ribosome then switches to translate the ORF on the tmRNA; the nascent peptide is terminated with the 'tag peptide' encoded by the tmRNA and targeted for degradation. The ribosome is freed to recommence translation, which seems to be the essential function of trans-translation. The protein is SsrA-binding protein of Ruegeria pomeroyi (strain ATCC 700808 / DSM 15171 / DSS-3) (Silicibacter pomeroyi).